Here is a 302-residue protein sequence, read N- to C-terminus: Sulfate adenylyltransferase subunit 2 (302 aa).

Belongs to the PAPS reductase family. CysD subfamily. As to quaternary structure, heterodimer composed of CysD, the smaller subunit, and CysN.

The enzyme catalyses sulfate + ATP + H(+) = adenosine 5'-phosphosulfate + diphosphate. It participates in sulfur metabolism; hydrogen sulfide biosynthesis; sulfite from sulfate: step 1/3. Its function is as follows. With CysN forms the ATP sulfurylase (ATPS) that catalyzes the adenylation of sulfate producing adenosine 5'-phosphosulfate (APS) and diphosphate, the first enzymatic step in sulfur assimilation pathway. APS synthesis involves the formation of a high-energy phosphoric-sulfuric acid anhydride bond driven by GTP hydrolysis by CysN coupled to ATP hydrolysis by CysD. The polypeptide is Sulfate adenylyltransferase subunit 2 (Zymomonas mobilis subsp. mobilis (strain ATCC 31821 / ZM4 / CP4)).